Here is a 479-residue protein sequence, read N- to C-terminus: Ribosomal RNA small subunit methyltransferase F (479 aa).

Residues 125–131 (AAAPGSK), Glu149, Asp176, and Asp194 each bind S-adenosyl-L-methionine. Cys247 (nucleophile) is an active-site residue.

Belongs to the class I-like SAM-binding methyltransferase superfamily. RsmB/NOP family.

The protein localises to the cytoplasm. It carries out the reaction cytidine(1407) in 16S rRNA + S-adenosyl-L-methionine = 5-methylcytidine(1407) in 16S rRNA + S-adenosyl-L-homocysteine + H(+). Functionally, specifically methylates the cytosine at position 1407 (m5C1407) of 16S rRNA. This Salmonella paratyphi A (strain ATCC 9150 / SARB42) protein is Ribosomal RNA small subunit methyltransferase F.